We begin with the raw amino-acid sequence, 554 residues long: MSYYQHPLDVTGLPSWKALEEHRLAMQHFSMREAFKADPTRFDDLSVSCSGLFLDYSKNLITPETRTLLVNLAREAGVEQAARAMFEGERINASENRPVLHTALRRPMGDSVMVDGKNIMRDVHTALAQMTDIVTRIHNNLWRGFSDKTITDVVNIGIGGSFLGPQLVSEALLPFTQHGVRTHYLANIDGSEFREVTAKLNVETTLFIISSKTFGTLETLKNAQAARNWYLGKGGTEEKLYRHFIAVTSNKQAAVDFGIREKNIFPMWDWVGGRYSLWSAIGLPIALAIGMSNFKDLLSGAYSMDQHFLSEPFESNMPVLLAMLGIWYHNFWGAQSYAFLPYDHYLRNFVKHLQQMDMESNGKSVRQDGTPVSCSTGPVIWGGVGANGQHAYHQLLHQGTPLIPADFIVPVVSHNPVADHHEWLYANCLSQSQALMLGKTREEAEAELRAKGLSEAEVQRLAPHKVIPGNRPSNTLVMETISPGRLGALIALYEHKVFVQGVIWGINSFDQWGVELGKELGKAVYNQMTRFDAAPAEDASTQGLIDFFRGRHRG.

Glu359 acts as the Proton donor in catalysis. Residues His390 and Lys518 contribute to the active site.

The protein belongs to the GPI family.

The protein resides in the cytoplasm. It catalyses the reaction alpha-D-glucose 6-phosphate = beta-D-fructose 6-phosphate. Its pathway is carbohydrate biosynthesis; gluconeogenesis. The protein operates within carbohydrate degradation; glycolysis; D-glyceraldehyde 3-phosphate and glycerone phosphate from D-glucose: step 2/4. In terms of biological role, catalyzes the reversible isomerization of glucose-6-phosphate to fructose-6-phosphate. The polypeptide is Glucose-6-phosphate isomerase (Stutzerimonas stutzeri (strain A1501) (Pseudomonas stutzeri)).